Here is a 381-residue protein sequence, read N- to C-terminus: Cobalt-precorrin-5B C(1)-methyltransferase (381 aa).

The protein belongs to the CbiD family.

It catalyses the reaction Co-precorrin-5B + S-adenosyl-L-methionine = Co-precorrin-6A + S-adenosyl-L-homocysteine. Its pathway is cofactor biosynthesis; adenosylcobalamin biosynthesis; cob(II)yrinate a,c-diamide from sirohydrochlorin (anaerobic route): step 6/10. Functionally, catalyzes the methylation of C-1 in cobalt-precorrin-5B to form cobalt-precorrin-6A. This Clostridium botulinum (strain Alaska E43 / Type E3) protein is Cobalt-precorrin-5B C(1)-methyltransferase.